The following is a 162-amino-acid chain: UPF0114 protein Sputw3181_3501 (162 aa).

3 helical membrane passes run 15 to 35, 53 to 73, and 136 to 156; these read IMAPIYLGLSLVLLGLGIKFF, LVLVTLSLIDITLVGGLIVMV, and IMWYLLIHITFVLSAFAMGYL.

The protein belongs to the UPF0114 family.

It localises to the cell membrane. This chain is UPF0114 protein Sputw3181_3501, found in Shewanella sp. (strain W3-18-1).